A 271-amino-acid chain; its full sequence is Undecaprenyl-diphosphatase 2 (271 aa).

The next 8 membrane-spanning stretches (helical) occupy residues 1–21 (MNFF…LFPI), 46–66 (NFLE…IVYF), 88–108 (ALIV…EQTI), 111–131 (AFSD…LLFF), 146–166 (LKGW…IPGF), 190–210 (SMLL…PKLI), 220–240 (LSLI…YILM), and 251–271 (MLPF…SKAI).

This sequence belongs to the UppP family.

The protein localises to the cell membrane. It carries out the reaction di-trans,octa-cis-undecaprenyl diphosphate + H2O = di-trans,octa-cis-undecaprenyl phosphate + phosphate + H(+). Its function is as follows. Catalyzes the dephosphorylation of undecaprenyl diphosphate (UPP). Confers resistance to bacitracin. In Oenococcus oeni (strain ATCC BAA-331 / PSU-1), this protein is Undecaprenyl-diphosphatase 2.